A 298-amino-acid chain; its full sequence is Inosose dehydratase (298 aa).

Belongs to the IolE/MocC family. Glutathione serves as cofactor. Requires Co(2+) as cofactor. It depends on Mn(2+) as a cofactor.

The enzyme catalyses scyllo-inosose = 3D-3,5/4-trihydroxycyclohexane-1,2-dione + H2O. It participates in polyol metabolism; myo-inositol degradation into acetyl-CoA; acetyl-CoA from myo-inositol: step 2/7. Functionally, catalyzes the dehydration of inosose (2-keto-myo-inositol, 2KMI or 2,4,6/3,5-pentahydroxycyclohexanone) to 3D-(3,5/4)-trihydroxycyclohexane-1,2-dione (D-2,3-diketo-4-deoxy-epi-inositol). The sequence is that of Inosose dehydratase from Bacillus cereus (strain AH820).